We begin with the raw amino-acid sequence, 685 residues long: DNA ligase (685 aa).

NAD(+)-binding positions include 47–51 (DSEYD), 96–97 (SL), and glutamate 125. Residue lysine 127 is the N6-AMP-lysine intermediate of the active site. 4 residues coordinate NAD(+): arginine 148, glutamate 185, lysine 304, and lysine 328. Zn(2+) contacts are provided by cysteine 422, cysteine 425, cysteine 440, and cysteine 446. Residues 605–685 (AEAQPLKGQT…ELLALLAANA (81 aa)) enclose the BRCT domain.

Belongs to the NAD-dependent DNA ligase family. LigA subfamily. Mg(2+) is required as a cofactor. Mn(2+) serves as cofactor.

The enzyme catalyses NAD(+) + (deoxyribonucleotide)n-3'-hydroxyl + 5'-phospho-(deoxyribonucleotide)m = (deoxyribonucleotide)n+m + AMP + beta-nicotinamide D-nucleotide.. DNA ligase that catalyzes the formation of phosphodiester linkages between 5'-phosphoryl and 3'-hydroxyl groups in double-stranded DNA using NAD as a coenzyme and as the energy source for the reaction. It is essential for DNA replication and repair of damaged DNA. In Shewanella baltica (strain OS223), this protein is DNA ligase.